The primary structure comprises 161 residues: Nucleotide-binding protein Pput_4372 (161 aa).

Belongs to the YajQ family.

Nucleotide-binding protein. The polypeptide is Nucleotide-binding protein Pput_4372 (Pseudomonas putida (strain ATCC 700007 / DSM 6899 / JCM 31910 / BCRC 17059 / LMG 24140 / F1)).